Here is a 103-residue protein sequence, read N- to C-terminus: Small ribosomal subunit protein uS10 (103 aa).

It belongs to the universal ribosomal protein uS10 family. As to quaternary structure, part of the 30S ribosomal subunit.

Involved in the binding of tRNA to the ribosomes. The protein is Small ribosomal subunit protein uS10 of Novosphingobium aromaticivorans (strain ATCC 700278 / DSM 12444 / CCUG 56034 / CIP 105152 / NBRC 16084 / F199).